The sequence spans 265 residues: NAD kinase 1 (265 aa).

Aspartate 45 serves as the catalytic Proton acceptor. NAD(+)-binding positions include 45 to 46 (DG), 122 to 123 (NE), arginine 148, aspartate 150, and alanine 185.

Belongs to the NAD kinase family. The cofactor is a divalent metal cation.

The protein localises to the cytoplasm. It carries out the reaction NAD(+) + ATP = ADP + NADP(+) + H(+). Involved in the regulation of the intracellular balance of NAD and NADP, and is a key enzyme in the biosynthesis of NADP. Catalyzes specifically the phosphorylation on 2'-hydroxyl of the adenosine moiety of NAD to yield NADP. The polypeptide is NAD kinase 1 (Bacillus cereus (strain ATCC 10987 / NRS 248)).